The following is a 66-amino-acid chain: Large ribosomal subunit protein bL35 (66 aa).

The protein belongs to the bacterial ribosomal protein bL35 family.

This chain is Large ribosomal subunit protein bL35, found in Methylobacterium nodulans (strain LMG 21967 / CNCM I-2342 / ORS 2060).